The following is a 374-amino-acid chain: MAVKVLVVDDSGFFRRRVSEILSADPTIQVVGTATNGKEAIDQALALKPDVITMDYEMPMMDGITAVRHIMQRCPTPVLMFSSLTHEGARVTLDALDAGAVDYLPKNFEDISRNPDKVKQMLCEKVHTISRSNRRLGSYARPAPVAAPVPASSPAPASSFASPAPARPAATARAAAPAASHSPAPKRKPYKLVAIGTSTGGPVALQRVLTQLPANFPAPIVLIQHMPAAFTKAFAERLDKLCRINVKEAEDGDMLRPGLALLAPGGKQMMIDGRGTVKILPGDERLNYKPCVDITFGSAAKSYGDKVLSVVLTGMGADGREGARLLKQGGSTVWAQDEASCVIYGMPMAIVKANLADAVYSLDDIGKHLVEACV.

Residues lysine 4–methionine 121 form the Response regulatory domain. Residue aspartate 55 is modified to 4-aspartylphosphate. The segment at proline 144–lysine 186 is disordered. Residues proline 154–proline 183 show a composition bias toward low complexity. Residues proline 183–valine 374 enclose the CheB-type methylesterase domain. Active-site residues include serine 198, histidine 225, and aspartate 318.

This sequence belongs to the CheB family. In terms of processing, phosphorylated by CheA. Phosphorylation of the N-terminal regulatory domain activates the methylesterase activity.

Its subcellular location is the cytoplasm. It catalyses the reaction [protein]-L-glutamate 5-O-methyl ester + H2O = L-glutamyl-[protein] + methanol + H(+). The enzyme catalyses L-glutaminyl-[protein] + H2O = L-glutamyl-[protein] + NH4(+). Involved in chemotaxis. Part of a chemotaxis signal transduction system that modulates chemotaxis in response to various stimuli. Catalyzes the demethylation of specific methylglutamate residues introduced into the chemoreceptors (methyl-accepting chemotaxis proteins or MCP) by CheR. Also mediates the irreversible deamidation of specific glutamine residues to glutamic acid. This Pseudomonas putida (Arthrobacter siderocapsulatus) protein is Protein-glutamate methylesterase/protein-glutamine glutaminase.